A 426-amino-acid polypeptide reads, in one-letter code: MSRYDVVVYGASGFTGAYVVEYLVNSEQFEGLSFAVAGRSEKKLREVLRNISQKTGKDVSNAAVIVADSADERSLNEMARQANVVINAVGPYRLYGEAVVKAAVENGASHVDISGEPAWIEKMQQKYSKQAKEQGVYVVSACGWDSIPADLGVNFLKKNFHGDLNHVESFVQLLTGPSGYSFNAGTYQTLILGLSGAATDKLGAVRKEIMPEKIVRGAVKLPKRPTLWEIKEKELNGVAVPFPGADKSIINRSQYYDATSRQVRPIHMETYIRLSSQFYGYLIGLWIMFLSIFVKYPFTRRILQQYPDQCSFYMFKNSGPSARQMAEASFVYWFFGYGYKETLPLDQQHEGKINRKVLATCKGPDAGYIATSGCVLSAALTLIRDKDNLPKDGGVYTTAAAFGNSKIYDYLASFGITYQLESEYDL.

A helical transmembrane segment spans residues 278 to 298; that stretch reads FYGYLIGLWIMFLSIFVKYPF.

Belongs to the saccharopine dehydrogenase family.

It is found in the membrane. The protein resides in the lipid droplet. The polypeptide is Lipid droplet localized protein (Caenorhabditis elegans).